We begin with the raw amino-acid sequence, 208 residues long: N-(5'-phosphoribosyl)anthranilate isomerase (208 aa).

The protein belongs to the TrpF family.

It catalyses the reaction N-(5-phospho-beta-D-ribosyl)anthranilate = 1-(2-carboxyphenylamino)-1-deoxy-D-ribulose 5-phosphate. The protein operates within amino-acid biosynthesis; L-tryptophan biosynthesis; L-tryptophan from chorismate: step 3/5. The polypeptide is N-(5'-phosphoribosyl)anthranilate isomerase (Chlamydia trachomatis serovar A (strain ATCC VR-571B / DSM 19440 / HAR-13)).